We begin with the raw amino-acid sequence, 159 residues long: Small ribosomal subunit protein uS15 (159 aa).

The segment covering 1 to 16 has biased composition (basic residues); that stretch reads MNKRKEKGKSHSKRPV. A disordered region spans residues 1–22; sequence MNKRKEKGKSHSKRPVRNTPPR.

The protein belongs to the universal ribosomal protein uS15 family. As to quaternary structure, part of the 30S ribosomal subunit.

This Ignicoccus hospitalis (strain KIN4/I / DSM 18386 / JCM 14125) protein is Small ribosomal subunit protein uS15.